Reading from the N-terminus, the 257-residue chain is E3 ubiquitin-protein ligase RNF170 (257 aa).

Topologically, residues 1-24 are lumenal; sequence MADNQEERPHFPLDEGSIIEGVSD. Residues 25-45 traverse the membrane as a helical segment; sequence QVIVVVLLSFVAVGSLIYLLL. Residues 46 to 200 are Cytoplasmic-facing; it reads RNDEQNIHPE…GGLFWMFRIR (155 aa). The RING-type zinc-finger motif lies at 87–130; the sequence is CPVCLQQATFPVETNCGHLFCGSCIIAYWRYGTWLGAINCPICR. Residues 201–221 form a helical membrane-spanning segment; that stretch reads IVLCLLGALLYLVSPLDIIPE. Ala222 is a topological domain (lumenal). Residues 223–243 traverse the membrane as a helical segment; it reads LFGILGFLDDLFVLFLLLIYI. Over 244–257 the chain is Cytoplasmic; it reads SIMYREVVTQRLYR.

It localises to the endoplasmic reticulum membrane. The catalysed reaction is S-ubiquitinyl-[E2 ubiquitin-conjugating enzyme]-L-cysteine + [acceptor protein]-L-lysine = [E2 ubiquitin-conjugating enzyme]-L-cysteine + N(6)-ubiquitinyl-[acceptor protein]-L-lysine.. Its pathway is protein modification; protein ubiquitination. In terms of biological role, E3 ubiquitin-protein ligase that plays an essential role in stimulus-induced inositol 1,4,5-trisphosphate receptor (ITPR) ubiquitination and degradation via the endoplasmic reticulum-associated degradation (ERAD) pathway. Also involved in ITPR turnover in resting cells. This is E3 ubiquitin-protein ligase RNF170 (rnf170) from Xenopus laevis (African clawed frog).